A 144-amino-acid polypeptide reads, in one-letter code: NADH dehydrogenase [ubiquinone] 1 alpha subcomplex subunit 13 (144 aa).

Alanine 2 carries the post-translational modification N-acetylalanine. A helical transmembrane segment spans residues leucine 30 to methionine 51. The important for inducing cell death stretch occupies residues proline 102 to threonine 144.

It belongs to the complex I NDUFA13 subunit family. Complex I is composed of 45 different subunits. Interacts with CARD15, but not with CARD4. Interacts with STAT3, but not with STAT1, STAT2 and STAT5A. Interacts with OLFM4. As to quaternary structure, (Microbial infection) Interacts with HHV-8 IRF1, in the nucleus, with HPV-16 E6 and SV40 LT. As to expression, widely expressed, with highest expression in heart, skeletal muscle, liver, kidney and placenta. In intestinal mucosa, down-regulated in areas involved in Crohn disease and ulcerative colitis.

It localises to the mitochondrion inner membrane. The protein resides in the nucleus. In terms of biological role, accessory subunit of the mitochondrial membrane respiratory chain NADH dehydrogenase (Complex I), that is believed not to be involved in catalysis. Complex I functions in the transfer of electrons from NADH to the respiratory chain. The immediate electron acceptor for the enzyme is believed to be ubiquinone. Involved in the interferon/all-trans-retinoic acid (IFN/RA) induced cell death. This apoptotic activity is inhibited by interaction with viral IRF1. Prevents the transactivation of STAT3 target genes. May play a role in CARD15-mediated innate mucosal responses and serve to regulate intestinal epithelial cell responses to microbes. This is NADH dehydrogenase [ubiquinone] 1 alpha subcomplex subunit 13 (NDUFA13) from Homo sapiens (Human).